The sequence spans 268 residues: CCAAT/enhancer-binding protein delta (268 aa).

Disordered stretches follow at residues Met-1–Pro-50, Leu-98–Gly-132, and Ala-152–Leu-223. At Ser-2 the chain carries N-acetylserine. A Glycyl lysine isopeptide (Lys-Gly) (interchain with G-Cter in SUMO) cross-link involves residue Lys-120. The segment covering Pro-155–Ala-173 has biased composition (pro residues). Basic and acidic residues predominate over residues Val-177–Asn-201. Residues Ser-191–Leu-254 form the bZIP domain. The tract at residues Arg-195 to Lys-222 is basic motif. Residues Leu-226 to Leu-254 are leucine-zipper.

The protein belongs to the bZIP family. C/EBP subfamily. Binds DNA as a homodimer and as a heterodimer. Can form stable heterodimers with CEBPA, CEBPB and CEBPE. Directly interacts with SPI1/PU.1; this interaction does not affect DNA-binding properties of each partner. Interacts with PRDM16. Ubiquitously expressed.

The protein localises to the nucleus. Functionally, transcription activator that recognizes two different DNA motifs: the CCAAT homology common to many promoters and the enhanced core homology common to many enhancers. Important transcription factor regulating the expression of genes involved in immune and inflammatory responses. Transcriptional activator that enhances IL6 transcription alone and as heterodimer with CEBPB. The chain is CCAAT/enhancer-binding protein delta (Cebpd) from Rattus norvegicus (Rat).